Reading from the N-terminus, the 190-residue chain is Potassium-transporting ATPase KdpC subunit (190 aa).

A helical transmembrane segment spans residues 10 to 30 (TFLFLLLITGGVYPLLTTALG).

Belongs to the KdpC family. The system is composed of three essential subunits: KdpA, KdpB and KdpC.

The protein resides in the cell inner membrane. Part of the high-affinity ATP-driven potassium transport (or Kdp) system, which catalyzes the hydrolysis of ATP coupled with the electrogenic transport of potassium into the cytoplasm. This subunit acts as a catalytic chaperone that increases the ATP-binding affinity of the ATP-hydrolyzing subunit KdpB by the formation of a transient KdpB/KdpC/ATP ternary complex. The chain is Potassium-transporting ATPase KdpC subunit from Escherichia coli O6:H1 (strain CFT073 / ATCC 700928 / UPEC).